Reading from the N-terminus, the 403-residue chain is 4-hydroxy-3-methylbut-2-en-1-yl diphosphate synthase (ferredoxin) (403 aa).

[4Fe-4S] cluster-binding residues include C312, C315, C346, and E353.

It belongs to the IspG family. Requires [4Fe-4S] cluster as cofactor.

It catalyses the reaction (2E)-4-hydroxy-3-methylbut-2-enyl diphosphate + 2 oxidized [2Fe-2S]-[ferredoxin] + H2O = 2-C-methyl-D-erythritol 2,4-cyclic diphosphate + 2 reduced [2Fe-2S]-[ferredoxin] + H(+). It participates in isoprenoid biosynthesis; isopentenyl diphosphate biosynthesis via DXP pathway; isopentenyl diphosphate from 1-deoxy-D-xylulose 5-phosphate: step 5/6. Its function is as follows. Converts 2C-methyl-D-erythritol 2,4-cyclodiphosphate (ME-2,4cPP) into 1-hydroxy-2-methyl-2-(E)-butenyl 4-diphosphate. This is 4-hydroxy-3-methylbut-2-en-1-yl diphosphate synthase (ferredoxin) from Synechocystis sp. (strain ATCC 27184 / PCC 6803 / Kazusa).